The primary structure comprises 1231 residues: Fanconi anemia group J protein homolog (1231 aa).

The region spanning 11-448 (GGVKILFPCR…SDHEPLRAVC (438 aa)) is the Helicase ATP-binding domain. 46–53 (SPTGSGKS) is a binding site for ATP. 2 disordered regions span residues 104 to 126 (TFSSDRQMNSTDNAPSNISGASS) and 147 to 166 (QDDDFQTDRKRIRQSHDEQL). A compositionally biased stretch (basic and acidic residues) spans 152-166 (QTDRKRIRQSHDEQL). The Nuclear localization signal signature appears at 155-173 (RKRIRQSHDEQLQARKRRC). 4 residues coordinate [4Fe-4S] cluster: cysteine 291, cysteine 304, cysteine 316, and cysteine 356. A DEAH box motif is present at residues 399–402 (DEAH). Polar residues predominate over residues 890-903 (SKNQQQRMQMSSTN). Disordered regions lie at residues 890 to 924 (SKNQQQRMQMSSTNCDDEPSQGTSSSSKNTSPTSS), 936 to 956 (VSEFTQPTSSTQSSVTSPPEI), and 1195 to 1231 (GNENAFNIGRNKGTEQKNRENRLSRSRNKGVSSFFLD). Low complexity-rich tracts occupy residues 909 to 924 (SQGTSSSSKNTSPTSS) and 940 to 954 (TQPTSSTQSSVTSPP). A compositionally biased stretch (basic and acidic residues) spans 1206-1217 (KGTEQKNRENRL).

It belongs to the DEAD box helicase family. DEAH subfamily. Requires [4Fe-4S] cluster as cofactor.

It is found in the nucleus. It catalyses the reaction Couples ATP hydrolysis with the unwinding of duplex DNA at the replication fork by translocating in the 5'-3' direction. This creates two antiparallel DNA single strands (ssDNA). The leading ssDNA polymer is the template for DNA polymerase III holoenzyme which synthesizes a continuous strand.. The catalysed reaction is ATP + H2O = ADP + phosphate + H(+). Functionally, DNA-dependent helicase and 5' to 3' DNA helicase required for the maintenance of chromosomal stability. Involved in the repair of DNA double-strand breaks by homologous recombination. Involved in the repair of abasic sites at replication forks by promoting the degradation of DNA-protein cross-links: acts by catalyzing unfolding of HMCES DNA-protein cross-link via its helicase activity, exposing the underlying DNA and enabling cleavage of the DNA-protein adduct by the SPRTN metalloprotease. This chain is Fanconi anemia group J protein homolog (brip1.L), found in Xenopus laevis (African clawed frog).